We begin with the raw amino-acid sequence, 116 residues long: Large ribosomal subunit protein bL17 (116 aa).

The protein belongs to the bacterial ribosomal protein bL17 family. Part of the 50S ribosomal subunit. Contacts protein L32.

This chain is Large ribosomal subunit protein bL17, found in Crocosphaera subtropica (strain ATCC 51142 / BH68) (Cyanothece sp. (strain ATCC 51142)).